The primary structure comprises 178 residues: UPF0098 protein PYRAB11530 (178 aa).

A signal peptide spans 1-22; the sequence is MRYLVPLLVFMVLGMGCLGGGG.

It belongs to the UPF0098 family.

This Pyrococcus abyssi (strain GE5 / Orsay) protein is UPF0098 protein PYRAB11530.